We begin with the raw amino-acid sequence, 346 residues long: [LysW]-lysine/[LysW]-ornithine hydrolase (346 aa).

Residue His-67 participates in Zn(2+) binding. Asp-69 is a catalytic residue. Asp-91 contributes to the Zn(2+) binding site. Glu-121 acts as the Proton acceptor in catalysis. 3 residues coordinate Zn(2+): Glu-122, Glu-145, and His-316.

Belongs to the peptidase M20A family. LysK subfamily. The cofactor is Zn(2+). Requires Co(2+) as cofactor.

It localises to the cytoplasm. The enzyme catalyses [amino-group carrier protein]-C-terminal-gamma-(L-lysyl)-L-glutamate + H2O = [amino-group carrier protein]-C-terminal-L-glutamate + L-lysine. It catalyses the reaction [amino-group carrier protein]-C-terminal-gamma-(L-ornithyl)-L-glutamate + H2O = [amino-group carrier protein]-C-terminal-L-glutamate + L-ornithine. It participates in amino-acid biosynthesis; L-lysine biosynthesis via AAA pathway; L-lysine from L-alpha-aminoadipate (Thermus route): step 5/5. Its pathway is amino-acid biosynthesis; L-arginine biosynthesis. In terms of biological role, catalyzes the release of L-lysine from [LysW]-gamma-L-lysine and the release of L-ornithine from [LysW]-L-ornithine. The polypeptide is [LysW]-lysine/[LysW]-ornithine hydrolase (Sulfurisphaera tokodaii (strain DSM 16993 / JCM 10545 / NBRC 100140 / 7) (Sulfolobus tokodaii)).